Reading from the N-terminus, the 311-residue chain is Heparan sulfate glucosamine 3-O-sulfotransferase 1 (311 aa).

The signal sequence occupies residues 1–20; it reads MTLLLLGAVLLVAQPQLVHS. The N-linked (GlcNAc...) asparagine glycan is linked to Asn52. Residues 68–72, Arg151, and Ser159 contribute to the 3'-phosphoadenylyl sulfate site; that span reads KGGTR. Residues Asn196, Asn246, and Asn253 are each glycosylated (N-linked (GlcNAc...) asparagine). Residue Tyr259 coordinates 3'-phosphoadenylyl sulfate. An intrachain disulfide couples Cys260 to Cys269. 274-278 is a binding site for 3'-phosphoadenylyl sulfate; it reads KGRAH.

This sequence belongs to the sulfotransferase 1 family.

Its subcellular location is the golgi apparatus lumen. It catalyses the reaction alpha-D-glucosaminyl-[heparan sulfate](n) + 3'-phosphoadenylyl sulfate = 3-sulfo-alpha-D-glucosaminyl-[heparan sulfate](n) + adenosine 3',5'-bisphosphate + H(+). In terms of biological role, sulfotransferase that utilizes 3'-phospho-5'-adenylyl sulfate (PAPS) to catalyze the transfer of a sulfo group to position 3 of glucosamine residues in heparan. Catalyzes the rate limiting step in the biosynthesis of heparan sulfate (HSact). This modification is a crucial step in the biosynthesis of anticoagulant heparan sulfate as it completes the structure of the antithrombin pentasaccharide binding site. In Mus musculus (Mouse), this protein is Heparan sulfate glucosamine 3-O-sulfotransferase 1 (Hs3st1).